Here is a 142-residue protein sequence, read N- to C-terminus: MAYNQEDSKRLSDKYKKEGHFDKLKREILSNPWNNTEENSESFEQALRKRVASTVKEMVNEDEELIFKNRGLTSALIESQLVKDNYLKLGSKMEGDNGDGEKKFDLDVYVRSKLQDPKLLEMIKGQLQETLNSYEEEANGST.

It belongs to the SHG1 family. Component of the Set1C/COMPASS complex which consists of SET1(2), BRE2(2), SPP1(2), SDC1(1), SHG1(1), SWD1(1), SWD2(1), and SWD3(1).

Its subcellular location is the nucleus. Functionally, the COMPASS (Set1C) complex specifically mono-, di- and trimethylates histone H3 to form H3K4me1/2/3, which subsequently plays a role in telomere length maintenance and transcription elongation regulation. The sequence is that of COMPASS component SHG1 (SHG1) from Saccharomyces cerevisiae (strain ATCC 204508 / S288c) (Baker's yeast).